The primary structure comprises 1483 residues: Mediator of RNA polymerase II transcription subunit 26 (1483 aa).

The TFIIS N-terminal domain maps to 8–85; the sequence is ELTTHLSQAL…KKWREMVGIQ (78 aa). 3 positions are modified to phosphoserine: serine 204, serine 258, and serine 421. 5 disordered regions span residues 227-278, 414-438, 480-518, 541-575, and 989-1041; these read SDSD…GQVA, HEYL…SKGV, VSMQ…SMNS, TDSD…SIQS, and DKSS…MKRR. Residues 426–435 are compositionally biased toward basic residues; it reads PKRRGRKKGS. The segment covering 480–495 has biased composition (low complexity); the sequence is VSMQSSASNLSNSSTN. Positions 496-518 are enriched in polar residues; that stretch reads RDLPSHTTFPRQTSSCSDTSMNS. At threonine 541 the chain carries Phosphothreonine. Positions 550–564 are enriched in basic and acidic residues; sequence PSHDSNKSQEIKECT. Serine 551 bears the Phosphoserine mark. Composition is skewed to polar residues over residues 565-575 and 989-999; these read SLDSNSNSIQS and DKSSNTGCQGN. Over residues 1000–1011 the composition is skewed to low complexity; it reads SPYSSSSSSSYS. Over residues 1020–1033 the composition is skewed to polar residues; it reads ITKNLQNKNIQLNS. Serine 1177 carries the phosphoserine modification. Phosphothreonine is present on threonine 1179.

The protein belongs to the Mediator complex subunit 26 family. In terms of assembly, component of the Mediator complex. Interacts with MED6 and MED17.

The protein resides in the nucleus. In terms of biological role, component of the Mediator complex, a coactivator involved in the regulated transcription of nearly all RNA polymerase II-dependent genes. Mediator functions as a bridge to convey information from gene-specific regulatory proteins to the basal RNA polymerase II transcription machinery. Mediator is recruited to promoters by direct interactions with regulatory proteins and serves as a scaffold for the assembly of a functional preinitiation complex with RNA polymerase II and the general transcription factors. Required for activated transcription of the MtnA gene. The protein is Mediator of RNA polymerase II transcription subunit 26 (MED26) of Drosophila melanogaster (Fruit fly).